The sequence spans 385 residues: UPF0764 protein C16orf89 homolog (385 aa).

A signal peptide spans 1 to 20 (MARLGLLLLLLLALPPHFSS). The tract at residues 344-385 (AHPEYYPNHGDPYSSSQSPASNYQDGAAGPDVQRTGRPLSVS) is disordered. Positions 356–367 (YSSSQSPASNYQ) are enriched in polar residues.

The protein belongs to the UPF0764 family. Homodimer. In terms of processing, glycosylated. Predominantly expressed in thyroid tissue.

The protein resides in the secreted. This is UPF0764 protein C16orf89 homolog from Mus musculus (Mouse).